A 328-amino-acid chain; its full sequence is Beta-ketoacyl-[acyl-carrier-protein] synthase III (328 aa).

Active-site residues include Cys-122 and His-255. The interval 256–260 (QANIR) is ACP-binding. Asn-285 is a catalytic residue.

This sequence belongs to the thiolase-like superfamily. FabH family. Homodimer.

The protein localises to the cytoplasm. It carries out the reaction malonyl-[ACP] + acetyl-CoA + H(+) = 3-oxobutanoyl-[ACP] + CO2 + CoA. It participates in lipid metabolism; fatty acid biosynthesis. In terms of biological role, catalyzes the condensation reaction of fatty acid synthesis by the addition to an acyl acceptor of two carbons from malonyl-ACP. Catalyzes the first condensation reaction which initiates fatty acid synthesis and may therefore play a role in governing the total rate of fatty acid production. Possesses both acetoacetyl-ACP synthase and acetyl transacylase activities. Its substrate specificity determines the biosynthesis of branched-chain and/or straight-chain of fatty acids. This chain is Beta-ketoacyl-[acyl-carrier-protein] synthase III, found in Polynucleobacter asymbioticus (strain DSM 18221 / CIP 109841 / QLW-P1DMWA-1) (Polynucleobacter necessarius subsp. asymbioticus).